A 710-amino-acid chain; its full sequence is Chloride channel protein CLC-e (710 aa).

Transmembrane regions (helical) follow at residues 74-94, 122-142, 164-184, 193-213, 222-242, 261-281, 296-316, 340-360, 379-399, 412-432, 451-471, and 472-492; these read ELAI…VVLF, IGSN…VVSI, VKAV…LGTG, SVEI…KSPQ, GSAA…FFAV, TTSM…IGLG, PGEL…SLAL, VFPV…PEVL, GLSA…TAWC, SLFI…LALA, GLVG…TAVL, and LLFE…AVGM. A disordered region spans residues 500-534; it reads QSKRQETRETKETRKRKSQEAVQSLTSSDDESSTN. A compositionally biased stretch (basic and acidic residues) spans 502–511; it reads KRQETRETKE. Residues 520-534 are compositionally biased toward polar residues; that stretch reads AVQSLTSSDDESSTN. CBS domains follow at residues 565–624 and 640–702; these read MRTR…GNNR and KCKV…ATRM. A helical transmembrane segment spans residues 667–687; that stretch reads HVAVVSGSIDAPRIHPVGVLD.

The protein belongs to the chloride channel (TC 2.A.49) family. Homodimer.

The protein resides in the membrane. It catalyses the reaction 2 chloride(in) + H(+)(out) = 2 chloride(out) + H(+)(in). In terms of biological role, voltage-gated thylakoid chloride (Cl) channel/transporter involved in chloride homeostasis after transition from light to dark. Influences chloroplast ultrastructure and subsequent photosynthetic electron transport. During photosynthetic response on transition from dark to low light, involved in a sequential mechanism of adaptation; VCCN1 and CLCe first trigger the activation of photoprotection, which is later down-regulated by KEA3 to a low steady state, while adjusting electron transport. Regulates photosynthesis by a pH-independent mechanism likely involving Cl(-) homeostasis. The protein is Chloride channel protein CLC-e of Arabidopsis thaliana (Mouse-ear cress).